The following is a 443-amino-acid chain: Chromosomal replication initiator protein DnaA (443 aa).

The tract at residues 1–76 (MMDAWPRCLE…GNGEVALAVG (76 aa)) is domain I, interacts with DnaA modulators. The domain II stretch occupies residues 76–105 (GSRPRAPEPAPAPVAATIAPQAAPIAPFAG). The segment at 106–323 (NLDSHYTFAN…GALNTLVARA (218 aa)) is domain III, AAA+ region. Residues G151, G153, K154, and T155 each contribute to the ATP site. A domain IV, binds dsDNA region spans residues 324-443 (NFTGRSITVE…WEKLIRKLSE (120 aa)).

The protein belongs to the DnaA family. In terms of assembly, oligomerizes as a right-handed, spiral filament on DNA at oriC.

The protein localises to the cytoplasm. Plays an essential role in the initiation and regulation of chromosomal replication. ATP-DnaA binds to the origin of replication (oriC) to initiate formation of the DNA replication initiation complex once per cell cycle. Binds the DnaA box (a 9 base pair repeat at the origin) and separates the double-stranded (ds)DNA. Forms a right-handed helical filament on oriC DNA; dsDNA binds to the exterior of the filament while single-stranded (ss)DNA is stabiized in the filament's interior. The ATP-DnaA-oriC complex binds and stabilizes one strand of the AT-rich DNA unwinding element (DUE), permitting loading of DNA polymerase. After initiation quickly degrades to an ADP-DnaA complex that is not apt for DNA replication. Binds acidic phospholipids. This is Chromosomal replication initiator protein DnaA from Xanthomonas oryzae pv. oryzae (strain KACC10331 / KXO85).